A 102-amino-acid chain; its full sequence is Large ribosomal subunit protein uL23 (102 aa).

This sequence belongs to the universal ribosomal protein uL23 family. Part of the 50S ribosomal subunit. Contacts protein L29, and trigger factor when it is bound to the ribosome.

Functionally, one of the early assembly proteins it binds 23S rRNA. One of the proteins that surrounds the polypeptide exit tunnel on the outside of the ribosome. Forms the main docking site for trigger factor binding to the ribosome. The sequence is that of Large ribosomal subunit protein uL23 from Paramagnetospirillum magneticum (strain ATCC 700264 / AMB-1) (Magnetospirillum magneticum).